The chain runs to 865 residues: Alanine--tRNA ligase (865 aa).

Residues His556, His560, Cys660, and His664 each contribute to the Zn(2+) site.

It belongs to the class-II aminoacyl-tRNA synthetase family. Requires Zn(2+) as cofactor.

Its subcellular location is the cytoplasm. The catalysed reaction is tRNA(Ala) + L-alanine + ATP = L-alanyl-tRNA(Ala) + AMP + diphosphate. Its function is as follows. Catalyzes the attachment of alanine to tRNA(Ala) in a two-step reaction: alanine is first activated by ATP to form Ala-AMP and then transferred to the acceptor end of tRNA(Ala). Also edits incorrectly charged Ser-tRNA(Ala) and Gly-tRNA(Ala) via its editing domain. The polypeptide is Alanine--tRNA ligase (Vesicomyosocius okutanii subsp. Calyptogena okutanii (strain HA)).